The sequence spans 271 residues: Ribosomal RNA small subunit methyltransferase A (271 aa).

6 residues coordinate S-adenosyl-L-methionine: His-11, Leu-13, Gly-38, Glu-58, Asp-86, and Asn-101.

This sequence belongs to the class I-like SAM-binding methyltransferase superfamily. rRNA adenine N(6)-methyltransferase family. RsmA subfamily.

It is found in the cytoplasm. It catalyses the reaction adenosine(1518)/adenosine(1519) in 16S rRNA + 4 S-adenosyl-L-methionine = N(6)-dimethyladenosine(1518)/N(6)-dimethyladenosine(1519) in 16S rRNA + 4 S-adenosyl-L-homocysteine + 4 H(+). Specifically dimethylates two adjacent adenosines (A1518 and A1519) in the loop of a conserved hairpin near the 3'-end of 16S rRNA in the 30S particle. May play a critical role in biogenesis of 30S subunits. This is Ribosomal RNA small subunit methyltransferase A from Helicobacter pylori (strain HPAG1).